We begin with the raw amino-acid sequence, 100 residues long: MQLAKVLGTVVSTSKTPNLTGVKLLLVQFLDTKGQPLERYEVAGDVVGAGLNEWVLVARGSAARKERGNGDRPLDAMVVGIIDTVNVASGSLYNKRDDGR.

Positions 1–83 (MQLAKVLGTV…LDAMVVGIID (83 aa)) constitute a BMV domain.

Belongs to the CcmL/EutN family. CcmL subfamily. As to quaternary structure, homopentamer. Interacts with full-length CcmM.

The protein localises to the carboxysome. In terms of biological role, probably forms vertices in the carboxysome, a polyhedral inclusion where RuBisCO (ribulose bisphosphate carboxylase, rbcL-rbcS) is sequestered. Has been modeled to induce curvature upon insertion into an otherwise flat hexagonal molecular layer of CcmK subunits. The polypeptide is Carboxysome shell vertex protein CcmL (Synechocystis sp. (strain ATCC 27184 / PCC 6803 / Kazusa)).